A 368-amino-acid polypeptide reads, in one-letter code: Germination protease (368 aa).

Residues 1 to 16 (MKKSELDVNQYLIRTD) constitute a propeptide that is removed on maturation.

Belongs to the peptidase A25 family. As to quaternary structure, homotetramer. Post-translationally, autoproteolytically processed. The inactive tetrameric zymogen termed p46 autoprocesses to a smaller form termed p41, which is active only during spore germination.

The enzyme catalyses Endopeptidase action with P4 Glu or Asp, P1 preferably Glu &gt; Asp, P1' hydrophobic and P2' Ala.. Initiates the degradation of small, acid-soluble proteins during spore germination. The sequence is that of Germination protease (gpr) from Bacillus subtilis (strain 168).